A 111-amino-acid chain; its full sequence is SPbeta prophage-derived uncharacterized protein YolC (111 aa).

The signal sequence occupies residues 1 to 25 (MKKRLIGFLVLVPALIMSGITLIEA).

The polypeptide is SPbeta prophage-derived uncharacterized protein YolC (yolC) (Bacillus subtilis (strain 168)).